The chain runs to 276 residues: Anthranilate synthase beta subunit 1, chloroplastic (276 aa).

A chloroplast-targeting transit peptide spans 1 to 50 (MAASTLYKSCLLQPKSGSTTRRLNPSLVNPLTNPTRVSVLGKSRRDVFAK). The region spanning 74–273 (PIIVIDNYDS…IKIVEKKESE (200 aa)) is the Glutamine amidotransferase type-1 domain. The active-site Nucleophile is the cysteine 152. Active-site residues include histidine 247 and glutamate 249.

In terms of assembly, heterotetramer consisting of two non-identical subunits: a beta subunit and a large alpha subunit. Expressed in the central cylinder of mature primary root zones, including pericycle and early lateral root primordia, and vasculature of cotyledons.

The protein localises to the plastid. It is found in the chloroplast. The catalysed reaction is chorismate + L-glutamine = anthranilate + pyruvate + L-glutamate + H(+). It participates in amino-acid biosynthesis; L-tryptophan biosynthesis; L-tryptophan from chorismate: step 1/5. Its function is as follows. Part of a heterotetrameric complex that catalyzes the two-step biosynthesis of anthranilate, an intermediate in the biosynthesis of L-tryptophan. In the first step, the glutamine-binding beta subunit of anthranilate synthase (AS) provides the glutamine amidotransferase activity which generates ammonia as a substrate that, along with chorismate, is used in the second step, catalyzed by the large alpha subunit of AS to produce anthranilate. Plays an important regulatory role in auxin production via the tryptophan-dependent biosynthetic pathway. The chain is Anthranilate synthase beta subunit 1, chloroplastic (ASB1) from Arabidopsis thaliana (Mouse-ear cress).